Consider the following 337-residue polypeptide: Tetraacyldisaccharide 4'-kinase (337 aa).

72 to 79 contributes to the ATP binding site; sequence TVGGSGKT.

This sequence belongs to the LpxK family.

It carries out the reaction a lipid A disaccharide + ATP = a lipid IVA + ADP + H(+). The protein operates within glycolipid biosynthesis; lipid IV(A) biosynthesis; lipid IV(A) from (3R)-3-hydroxytetradecanoyl-[acyl-carrier-protein] and UDP-N-acetyl-alpha-D-glucosamine: step 6/6. In terms of biological role, transfers the gamma-phosphate of ATP to the 4'-position of a tetraacyldisaccharide 1-phosphate intermediate (termed DS-1-P) to form tetraacyldisaccharide 1,4'-bis-phosphate (lipid IVA). In Shewanella sediminis (strain HAW-EB3), this protein is Tetraacyldisaccharide 4'-kinase.